We begin with the raw amino-acid sequence, 572 residues long: Laccase-3 (572 aa).

The N-terminal stretch at methionine 1–leucine 18 is a signal peptide. Plastocyanin-like domains lie at threonine 21 to tyrosine 145 and isoleucine 157 to glutamate 304. Cu cation is bound by residues histidine 82, histidine 84, histidine 127, and histidine 129. Residues cysteine 103 and cysteine 561 are joined by a disulfide bond. 5 N-linked (GlcNAc...) asparagine glycosylation sites follow: asparagine 182, asparagine 228, asparagine 294, asparagine 367, and asparagine 405. The Plastocyanin-like 3 domain maps to aspartate 422–alanine 540. The Cu cation site is built by histidine 470, histidine 473, histidine 475, histidine 522, cysteine 523, histidine 524, and histidine 528.

It belongs to the multicopper oxidase family. As to quaternary structure, homodimer. Cu cation serves as cofactor. In mycelia, at a lower level than LCC4.

The protein resides in the secreted. The catalysed reaction is 4 hydroquinone + O2 = 4 benzosemiquinone + 2 H2O. In terms of biological role, lignin degradation and detoxification of lignin-derived products. The chain is Laccase-3 (LCC3) from Thanatephorus cucumeris (Black scurf of potato).